The following is a 301-amino-acid chain: Acetyl-coenzyme A carboxylase carboxyl transferase subunit beta (301 aa).

The region spanning leucine 29–proline 298 is the CoA carboxyltransferase N-terminal domain.

Belongs to the AccD/PCCB family. In terms of assembly, acetyl-CoA carboxylase is a heterohexamer composed of biotin carboxyl carrier protein (AccB), biotin carboxylase (AccC) and two subunits each of ACCase subunit alpha (AccA) and ACCase subunit beta (AccD).

It is found in the cytoplasm. It carries out the reaction N(6)-carboxybiotinyl-L-lysyl-[protein] + acetyl-CoA = N(6)-biotinyl-L-lysyl-[protein] + malonyl-CoA. The protein operates within lipid metabolism; malonyl-CoA biosynthesis; malonyl-CoA from acetyl-CoA: step 1/1. Component of the acetyl coenzyme A carboxylase (ACC) complex. Biotin carboxylase (BC) catalyzes the carboxylation of biotin on its carrier protein (BCCP) and then the CO(2) group is transferred by the transcarboxylase to acetyl-CoA to form malonyl-CoA. The chain is Acetyl-coenzyme A carboxylase carboxyl transferase subunit beta from Methylobacterium nodulans (strain LMG 21967 / CNCM I-2342 / ORS 2060).